The primary structure comprises 345 residues: 3-dehydroquinate synthase (345 aa).

Residues 86 to 90 (GALLD), 110 to 111 (TT), Lys-123, and Lys-132 each bind NAD(+). Residues Glu-165, His-229, and His-243 each contribute to the Zn(2+) site.

The protein belongs to the sugar phosphate cyclases superfamily. Dehydroquinate synthase family. The cofactor is NAD(+). Co(2+) serves as cofactor. Zn(2+) is required as a cofactor.

The protein localises to the cytoplasm. It catalyses the reaction 7-phospho-2-dehydro-3-deoxy-D-arabino-heptonate = 3-dehydroquinate + phosphate. It functions in the pathway metabolic intermediate biosynthesis; chorismate biosynthesis; chorismate from D-erythrose 4-phosphate and phosphoenolpyruvate: step 2/7. In terms of biological role, catalyzes the conversion of 3-deoxy-D-arabino-heptulosonate 7-phosphate (DAHP) to dehydroquinate (DHQ). The protein is 3-dehydroquinate synthase of Pyrobaculum aerophilum (strain ATCC 51768 / DSM 7523 / JCM 9630 / CIP 104966 / NBRC 100827 / IM2).